Consider the following 238-residue polypeptide: Probable amino-acid ABC transporter permease protein y4tF (238 aa).

One can recognise an ABC transmembrane type-1 domain in the interval 29-223 (AWVTIQFTLY…GIALVLSFFM (195 aa)). 5 helical membrane passes run 33–53 (IQFT…FGIG), 77–97 (LLVQ…MMGI), 103–123 (PVVA…AEIV), 152–172 (VALP…AIAA), and 203–223 (TVYT…SFFM).

This sequence belongs to the binding-protein-dependent transport system permease family. HisMQ subfamily.

Its subcellular location is the cell inner membrane. Probably part of the binding-protein-dependent transport system y4tEFGH for an amino acid. Probably responsible for the translocation of the substrate across the membrane. The chain is Probable amino-acid ABC transporter permease protein y4tF from Sinorhizobium fredii (strain NBRC 101917 / NGR234).